A 189-amino-acid polypeptide reads, in one-letter code: GTPase HRas (189 aa).

G10–S17 provides a ligand contact to GTP. The Effector region signature appears at Y32 to Y40. GTP-binding positions include D57–Q61 and N116–D119. 2 S-palmitoyl cysteine; by host lipidation sites follow: C181 and C184. C186 is subject to Cysteine methyl ester; by host. C186 carries the S-farnesyl cysteine; by host lipid modification. Residues V187–S189 constitute a propeptide, removed in mature form.

This sequence belongs to the small GTPase superfamily. Ras family.

The protein localises to the host cell membrane. It carries out the reaction GTP + H2O = GDP + phosphate + H(+). Alternates between an inactive form bound to GDP and an active form bound to GTP. Activated by a guanine nucleotide-exchange factor (GEF) and inactivated by a GTPase-activating protein (GAP). This is GTPase HRas (H-RAS) from Moloney murine sarcoma virus (MoMSV).